The following is a 558-amino-acid chain: Potassium-transporting ATPase potassium-binding subunit (558 aa).

A run of 11 helical transmembrane segments spans residues 1 to 21, 58 to 78, 85 to 105, 130 to 150, 179 to 199, 245 to 265, 279 to 299, 374 to 394, 416 to 436, 484 to 504, and 527 to 547; these read MDTL…VLVH, WPAY…VVYG, FLPY…NTAV, GLAV…IALV, LSLV…FAGF, PTAW…FSLP, TAIA…LTLF, GLYG…LLVG, ILVT…IPAV, ALGV…LALA, and FVGL…FPVL.

The protein belongs to the KdpA family. In terms of assembly, the system is composed of three essential subunits: KdpA, KdpB and KdpC.

The protein resides in the cell membrane. Functionally, part of the high-affinity ATP-driven potassium transport (or Kdp) system, which catalyzes the hydrolysis of ATP coupled with the electrogenic transport of potassium into the cytoplasm. This subunit binds the extracellular potassium ions and delivers the ions to the membrane domain of KdpB through an intramembrane tunnel. This chain is Potassium-transporting ATPase potassium-binding subunit, found in Clavibacter sepedonicus (Clavibacter michiganensis subsp. sepedonicus).